The following is a 453-amino-acid chain: Serine/threonine-protein phosphatase 2A 55 kDa regulatory subunit B delta isoform (453 aa).

4 WD repeats span residues 32–71 (AEAD…KSRP), 97–138 (EIEE…KRAE), 181–219 (AHTY…RSFN), and 230–270 (ELTE…LCDR). Position 285 is a phosphoserine (serine 285). 3 WD repeats span residues 289–327 (EIIS…RPVE), 344–385 (ENDC…DVTL), and 420–452 (DFNK…QDKI). Tyrosine 305 is subject to Phosphotyrosine. At threonine 308 the chain carries Phosphothreonine.

This sequence belongs to the phosphatase 2A regulatory subunit B family. In terms of assembly, PP2A consists of a common heterodimeric core enzyme, composed of a 36 kDa catalytic subunit (subunit C) and a 65 kDa constant regulatory subunit (PR65 or subunit A), that associates with a variety of regulatory subunits. Proteins that associate with the core dimer include three families of regulatory subunits B (the R2/B/PR55/B55, R3/B''/PR72/PR130/PR59 and R5/B'/B56 families), the 48 kDa variable regulatory subunit, viral proteins, and cell signaling molecules. Interacts with ENSA (when phosphorylated at 'Ser-67') and ARPP19 (when phosphorylated at 'Ser-62'), leading to inhibit PP2A activity. Interacts with IER5.

Its subcellular location is the cytoplasm. Functionally, substrate-recognition subunit of protein phosphatase 2A (PP2A) that plays a key role in cell cycle by controlling mitosis entry and exit. Involved in chromosome clustering during late mitosis by mediating dephosphorylation of MKI67. The activity of PP2A complexes containing PPP2R2D (PR55-delta) fluctuate during the cell cycle: the activity is high in interphase and low in mitosis. The polypeptide is Serine/threonine-protein phosphatase 2A 55 kDa regulatory subunit B delta isoform (PPP2R2D) (Homo sapiens (Human)).